The sequence spans 159 residues: MINYLKSFFLYEIVRGMALTLKYFFKPKVTINYPYEKSPISPRFKGEHALRRYENGEERCIACKLCEAICPAQAIVIEADEREDGSRRTTRYDIDMTKCIYCGLCQEACPVDAIVEGPNFEFASLTHTALIYDKERLLQNGDRWEQALASKLHKDYEYR.

2 4Fe-4S ferredoxin-type domains span residues 51–80 (RRYENGEERCIACKLCEAICPAQAIVIEAD) and 90–119 (TRYDIDMTKCIYCGLCQEACPVDAIVEGPN). [4Fe-4S] cluster contacts are provided by Cys60, Cys63, Cys66, Cys70, Cys99, Cys102, Cys105, and Cys109.

It belongs to the complex I 23 kDa subunit family. In terms of assembly, NDH-1 is composed of 14 different subunits. Subunits NuoA, H, J, K, L, M, N constitute the membrane sector of the complex. The cofactor is [4Fe-4S] cluster.

It is found in the cell inner membrane. The catalysed reaction is a quinone + NADH + 5 H(+)(in) = a quinol + NAD(+) + 4 H(+)(out). Functionally, NDH-1 shuttles electrons from NADH, via FMN and iron-sulfur (Fe-S) centers, to quinones in the respiratory chain. The immediate electron acceptor for the enzyme in this species is believed to be ubiquinone. Couples the redox reaction to proton translocation (for every two electrons transferred, four hydrogen ions are translocated across the cytoplasmic membrane), and thus conserves the redox energy in a proton gradient. The protein is NADH-quinone oxidoreductase subunit I of Rickettsia peacockii (strain Rustic).